The sequence spans 379 residues: Glucose-1-phosphate adenylyltransferase (379 aa).

Residues Gly164, 179–180 (EK), and Ser190 each bind alpha-D-glucose 1-phosphate.

It belongs to the bacterial/plant glucose-1-phosphate adenylyltransferase family. In terms of assembly, homotetramer.

The catalysed reaction is alpha-D-glucose 1-phosphate + ATP + H(+) = ADP-alpha-D-glucose + diphosphate. It functions in the pathway glycan biosynthesis; glycogen biosynthesis. Functionally, involved in the biosynthesis of ADP-glucose, a building block required for the elongation reactions to produce glycogen. Catalyzes the reaction between ATP and alpha-D-glucose 1-phosphate (G1P) to produce pyrophosphate and ADP-Glc. This is Glucose-1-phosphate adenylyltransferase from Streptococcus equi subsp. zooepidemicus (strain H70).